Consider the following 239-residue polypeptide: MPICPLGKVIVFPPVSLAMEDGLLAVGGDLSPYRLLEAYRQGIFPWYSPGEPILWWAPQPRFVLFPDEILLSRSMRQILRKKHFQVTLDRNFDAVIHACATIGRPAQEGTWITEEMQEAYSILHELGYAHSVEVWRDRGLIGGLYGVSLGGCFFGESMFSRESNASKAALIFLSSLLKILRFTLIDCQVYTSHLALLGARFIPRETFTALIRKSLRRPTLRGNWSTHPETADKLPGHEF.

Belongs to the L/F-transferase family.

Its subcellular location is the cytoplasm. It carries out the reaction N-terminal L-lysyl-[protein] + L-leucyl-tRNA(Leu) = N-terminal L-leucyl-L-lysyl-[protein] + tRNA(Leu) + H(+). The enzyme catalyses N-terminal L-arginyl-[protein] + L-leucyl-tRNA(Leu) = N-terminal L-leucyl-L-arginyl-[protein] + tRNA(Leu) + H(+). The catalysed reaction is L-phenylalanyl-tRNA(Phe) + an N-terminal L-alpha-aminoacyl-[protein] = an N-terminal L-phenylalanyl-L-alpha-aminoacyl-[protein] + tRNA(Phe). Functions in the N-end rule pathway of protein degradation where it conjugates Leu, Phe and, less efficiently, Met from aminoacyl-tRNAs to the N-termini of proteins containing an N-terminal arginine or lysine. This Syntrophus aciditrophicus (strain SB) protein is Leucyl/phenylalanyl-tRNA--protein transferase.